A 284-amino-acid polypeptide reads, in one-letter code: NAD kinase (284 aa).

Asp-70 functions as the Proton acceptor in the catalytic mechanism. NAD(+) is bound by residues 70–71, 139–140, Lys-167, Asp-169, Leu-177, 180–185, and Gln-236; these read DG, NE, and TAYNLS.

The protein belongs to the NAD kinase family. A divalent metal cation serves as cofactor.

Its subcellular location is the cytoplasm. It carries out the reaction NAD(+) + ATP = ADP + NADP(+) + H(+). In terms of biological role, involved in the regulation of the intracellular balance of NAD and NADP, and is a key enzyme in the biosynthesis of NADP. Catalyzes specifically the phosphorylation on 2'-hydroxyl of the adenosine moiety of NAD to yield NADP. The chain is NAD kinase from Helicobacter pylori (strain ATCC 700392 / 26695) (Campylobacter pylori).